The chain runs to 126 residues: Putative lipoprotein LprD (126 aa).

A signal peptide spans 1-21 (MSTTRRRRPALIALVIIATCG). A lipid anchor (N-palmitoyl cysteine) is attached at Cys22. Cys22 carries S-diacylglycerol cysteine lipidation. Residues 40-60 (FQNLGYALQWPLFAWFCVYAY) traverse the membrane as a helical segment. Residues 70 to 101 (PPQPPTGGAAAEIPAGLLPERPKPAQQPPDDP) form a disordered region.

The protein to M.leprae ML1177.

The protein localises to the cell membrane. The chain is Putative lipoprotein LprD (lprD) from Mycobacterium tuberculosis (strain CDC 1551 / Oshkosh).